We begin with the raw amino-acid sequence, 158 residues long: Phosphopantetheine adenylyltransferase (158 aa).

Threonine 9 contacts substrate. ATP-binding positions include threonine 9–phenylalanine 10 and histidine 17. Positions 41, 73, and 87 each coordinate substrate. ATP-binding positions include glycine 88–arginine 90, glutamate 98, and tryptophan 123–threonine 129.

Belongs to the bacterial CoaD family. As to quaternary structure, homohexamer. Mg(2+) serves as cofactor.

Its subcellular location is the cytoplasm. The catalysed reaction is (R)-4'-phosphopantetheine + ATP + H(+) = 3'-dephospho-CoA + diphosphate. Its pathway is cofactor biosynthesis; coenzyme A biosynthesis; CoA from (R)-pantothenate: step 4/5. Its function is as follows. Reversibly transfers an adenylyl group from ATP to 4'-phosphopantetheine, yielding dephospho-CoA (dPCoA) and pyrophosphate. This chain is Phosphopantetheine adenylyltransferase, found in Histophilus somni (strain 129Pt) (Haemophilus somnus).